The sequence spans 449 residues: Allantoinase (449 aa).

Positions 59, 61, 146, 182, 238, and 311 each coordinate Zn(2+). K146 bears the N6-carboxylysine mark.

Belongs to the metallo-dependent hydrolases superfamily. Allantoinase family. In terms of assembly, homotetramer. The cofactor is Zn(2+). Carboxylation allows a single lysine to coordinate two zinc ions.

It carries out the reaction (S)-allantoin + H2O = allantoate + H(+). It functions in the pathway nitrogen metabolism; (S)-allantoin degradation; allantoate from (S)-allantoin: step 1/1. Catalyzes the conversion of allantoin (5-ureidohydantoin) to allantoic acid by hydrolytic cleavage of the five-member hydantoin ring. In Deinococcus geothermalis (strain DSM 11300 / CIP 105573 / AG-3a), this protein is Allantoinase.